Here is a 429-residue protein sequence, read N- to C-terminus: Enolase (429 aa).

Gln-162 is a (2R)-2-phosphoglycerate binding site. Glu-204 (proton donor) is an active-site residue. Mg(2+)-binding residues include Asp-241, Glu-286, and Asp-313. Residues Lys-338, Arg-367, Ser-368, and Lys-389 each coordinate (2R)-2-phosphoglycerate. The Proton acceptor role is filled by Lys-338.

This sequence belongs to the enolase family. Mg(2+) is required as a cofactor.

The protein resides in the cytoplasm. It localises to the secreted. It is found in the cell surface. It catalyses the reaction (2R)-2-phosphoglycerate = phosphoenolpyruvate + H2O. It functions in the pathway carbohydrate degradation; glycolysis; pyruvate from D-glyceraldehyde 3-phosphate: step 4/5. In terms of biological role, catalyzes the reversible conversion of 2-phosphoglycerate (2-PG) into phosphoenolpyruvate (PEP). It is essential for the degradation of carbohydrates via glycolysis. The chain is Enolase from Halalkalibacterium halodurans (strain ATCC BAA-125 / DSM 18197 / FERM 7344 / JCM 9153 / C-125) (Bacillus halodurans).